The chain runs to 240 residues: Tubulin alpha chain (240 aa).

N17 contacts GTP. E43 is a catalytic residue.

The protein belongs to the tubulin family. As to quaternary structure, dimer of alpha and beta chains. A typical microtubule is a hollow water-filled tube with an outer diameter of 25 nm and an inner diameter of 15 nM. Alpha-beta heterodimers associate head-to-tail to form protofilaments running lengthwise along the microtubule wall with the beta-tubulin subunit facing the microtubule plus end conferring a structural polarity. Microtubules usually have 13 protofilaments but different protofilament numbers can be found in some organisms and specialized cells. It depends on Mg(2+) as a cofactor. In terms of processing, undergoes a tyrosination/detyrosination cycle, the cyclic removal and re-addition of a C-terminal tyrosine residue by the enzymes tubulin tyrosine carboxypeptidase (TTCP) and tubulin tyrosine ligase (TTL), respectively.

It is found in the cytoplasm. Its subcellular location is the cytoskeleton. It carries out the reaction GTP + H2O = GDP + phosphate + H(+). Functionally, tubulin is the major constituent of microtubules, a cylinder consisting of laterally associated linear protofilaments composed of alpha- and beta-tubulin heterodimers. Microtubules grow by the addition of GTP-tubulin dimers to the microtubule end, where a stabilizing cap forms. Below the cap, tubulin dimers are in GDP-bound state, owing to GTPase activity of alpha-tubulin. This is Tubulin alpha chain from Octopus vulgaris (Common octopus).